We begin with the raw amino-acid sequence, 308 residues long: E3 ubiquitin-protein ligase SINAT2 (308 aa).

The RING-type zinc-finger motif lies at 60–96 (CPVCTNLMYPPIHQCPNGHTLCSNCKLRVQNTCPTCR). The tract at residues 110–303 (VAESLEVPCR…QELKLRVTGR (194 aa)) is SBD. An SIAH-type zinc finger spans residues 113-173 (SLEVPCRYQN…LVVHLKDDHK (61 aa)). Zn(2+) contacts are provided by cysteine 118, cysteine 125, histidine 137, cysteine 141, cysteine 148, cysteine 155, histidine 167, and histidine 172.

The protein belongs to the SINA (Seven in absentia) family. Interacts with RAP2-2. Interacts with SINAT6. Interacts with ATG6 and TRAF1A. Interacts with WAV3. Interacts with FREE1. Interacts with ELC/VPS23A.

Its subcellular location is the endosome. It is found in the multivesicular body. It localises to the cytoplasmic vesicle. The protein localises to the autophagosome. It catalyses the reaction S-ubiquitinyl-[E2 ubiquitin-conjugating enzyme]-L-cysteine + [acceptor protein]-L-lysine = [E2 ubiquitin-conjugating enzyme]-L-cysteine + N(6)-ubiquitinyl-[acceptor protein]-L-lysine.. It functions in the pathway protein modification; protein ubiquitination. E3 ubiquitin-protein ligase that mediates ubiquitination and subsequent proteasomal degradation of target proteins. E3 ubiquitin ligases accept ubiquitin from an E2 ubiquitin-conjugating enzyme in the form of a thioester and then directly transfers the ubiquitin to targeted substrates. It probably triggers the ubiquitin-mediated degradation of different substrates. Mediates the proteasomal-dependent degradation of ATG6, a component of the autophagosome complex. Requires TRAF1A/MUSE14 and TRAF1B/MUSE13 to target ATG6 for ubiquitination and subsequent regulation of autophagosome assembly. Modulates directly the ubiquitination and proteasomal-dependent degradation of FREE1, a component of the ESCRT-I complex. Modulates directly the ubiquitination and proteasomal-dependent degradation of ELC/VPS23A, a component of the ESCRT-I complex. In Arabidopsis thaliana (Mouse-ear cress), this protein is E3 ubiquitin-protein ligase SINAT2.